The primary structure comprises 107 residues: UPF0145 protein Spro_1658 (107 aa).

This sequence belongs to the UPF0145 family.

The polypeptide is UPF0145 protein Spro_1658 (Serratia proteamaculans (strain 568)).